A 519-amino-acid chain; its full sequence is Galactokinase (519 aa).

Alpha-D-galactose contacts are provided by R47, E53, H54, and D56. Residues G159, G161, S163, and S164 each contribute to the ATP site. D209 provides a ligand contact to alpha-D-galactose. Residue D209 is the Proton acceptor of the active site. N257 and K258 together coordinate ATP. An alpha-D-galactose-binding site is contributed by Y266.

This sequence belongs to the GHMP kinase family. GalK subfamily.

It catalyses the reaction alpha-D-galactose + ATP = alpha-D-galactose 1-phosphate + ADP + H(+). Its pathway is carbohydrate metabolism; galactose metabolism. Its function is as follows. Galactokinase is a key enzyme in the galactose metabolism where it catalyzes the conversion of alpha-D-galactose to galactose 1-phosphate. Can also induce the transcription of the gal genes in response to the organism being challenged with galactose as the sole source of carbon. The sequence is that of Galactokinase (gal1) from Schizosaccharomyces pombe (strain 972 / ATCC 24843) (Fission yeast).